Reading from the N-terminus, the 353-residue chain is Carbamoyl phosphate synthase arginine-specific small chain (353 aa).

Residues 1-162 form a CPSase region; that stretch reads MEGYLVLEDG…EISTFGDGNK (162 aa). 3 residues coordinate L-glutamine: Ser-44, Gly-210, and Gly-212. The 187-residue stretch at 163–349 folds into the Glutamine amidotransferase type-1 domain; sequence HIALIDFGYK…LKNVIPARRE (187 aa). Cys-237 functions as the Nucleophile in the catalytic mechanism. Leu-238, Gln-241, Asn-279, and Tyr-282 together coordinate L-glutamine. Catalysis depends on residues His-322 and Glu-324.

Belongs to the CarA family. In terms of assembly, composed of two chains; the small (or glutamine) chain promotes the hydrolysis of glutamine to ammonia, which is used by the large (or ammonia) chain to synthesize carbamoyl phosphate. Tetramer of heterodimers (alpha,beta)4.

It carries out the reaction hydrogencarbonate + L-glutamine + 2 ATP + H2O = carbamoyl phosphate + L-glutamate + 2 ADP + phosphate + 2 H(+). The catalysed reaction is L-glutamine + H2O = L-glutamate + NH4(+). Its pathway is amino-acid biosynthesis; L-arginine biosynthesis; carbamoyl phosphate from bicarbonate: step 1/1. Its function is as follows. Small subunit of the glutamine-dependent carbamoyl phosphate synthetase (CPSase). CPSase catalyzes the formation of carbamoyl phosphate from the ammonia moiety of glutamine, carbonate, and phosphate donated by ATP, constituting the first step of the biosynthetic pathway leading to arginine and/or urea. The small subunit (glutamine amidotransferase) binds and cleaves glutamine to supply the large subunit with the substrate ammonia. The protein is Carbamoyl phosphate synthase arginine-specific small chain of Bacillus subtilis (strain 168).